Consider the following 376-residue polypeptide: MFNPHALDVPAVIFDNGSGLCKAGLSGEIGPRHVISSVLGHCKFNVPLARLNQKYFVGQEALYKYEALHLHYPIERGLVTGWDDMEKLWKHLFERELGVKPSQQPVLMTEPSLNPREIREKLAEMMFETFSVPGFYLSNHAVAALYASACVTGLVVDSGDGVTCTVPIFEGYSLPHAVTKLCMAGRDITEHLTRLLFASGFNFPCILNKAVVNNIKEKLCYIALEPEKELRKSRGEVLGAYRLPDGHVIHFGDELYQVPEVLFAPDQLGIHSPGLSKMVSSSIMKCDTDIQNKLYADIVLSGGTTLLPGLEERLMKEVEQLASKGTPIKITASPDRCFSAWIGASIMTSMSSFKQMWVTSADFKEYGTSVVQRRCF.

It belongs to the actin family. As to expression, in skin, expressed in the basal, spinous and granular layers of the epidermis. Also expressed in hair follicles, sebaceaous glands, eccrine sweat glands and semen.

The protein localises to the cytoplasm. It localises to the cytoskeleton. Its subcellular location is the nucleus. The protein resides in the cytoplasmic vesicle. It is found in the secretory vesicle. The protein localises to the acrosome. In terms of biological role, negatively regulates the Hedgehog (SHH) signaling. Binds to the promoter of the SHH signaling mediator, GLI1, and inhibits its expression. The polypeptide is Actin-related protein T1 (Homo sapiens (Human)).